A 242-amino-acid chain; its full sequence is Large ribosomal subunit protein uL1 (242 aa).

Belongs to the universal ribosomal protein uL1 family. Part of the 50S ribosomal subunit.

Functionally, binds directly to 23S rRNA. The L1 stalk is quite mobile in the ribosome, and is involved in E site tRNA release. Protein L1 is also a translational repressor protein, it controls the translation of the L11 operon by binding to its mRNA. The protein is Large ribosomal subunit protein uL1 of Sulfurihydrogenibium sp. (strain YO3AOP1).